The chain runs to 469 residues: Neuraminidase (469 aa).

Over 1–9 the chain is Intravirion; it reads MNPNQKIIT. Residues 10–30 traverse the membrane as a helical segment; sequence IGSVSLTIATICFLMQIAILV. Residues 11–33 are involved in apical transport and lipid raft association; the sequence is GSVSLTIATICFLMQIAILVTTV. The Virion surface segment spans residues 31–469; sequence TTVTLHFKQY…DGADINLMPI (439 aa). The interval 36–88 is hypervariable stalk region; that stretch reads HFKQYECDSPANNQVMPCEPIIIERNITEIVYLTNTTIEKEICPKLVEYRNWS. N-linked (GlcNAc...) asparagine; by host glycosylation is found at asparagine 61, asparagine 70, and asparagine 86. The interval 91-469 is head of neuraminidase; sequence QCKITGFAPF…DGADINLMPI (379 aa). Cystine bridges form between cysteine 92–cysteine 417, cysteine 124–cysteine 129, cysteine 183–cysteine 230, cysteine 232–cysteine 237, cysteine 278–cysteine 291, cysteine 280–cysteine 289, cysteine 318–cysteine 337, and cysteine 421–cysteine 447. Residue arginine 118 coordinates substrate. A glycan (N-linked (GlcNAc...) asparagine; by host) is linked at asparagine 146. The active-site Proton donor/acceptor is aspartate 151. A substrate-binding site is contributed by arginine 152. N-linked (GlcNAc...) asparagine; by host glycans are attached at residues asparagine 200 and asparagine 234. Residue 276–277 coordinates substrate; it reads EE. Arginine 292 contacts substrate. The Ca(2+) site is built by aspartate 293, glycine 297, and aspartate 324. Arginine 371 is a binding site for substrate. The N-linked (GlcNAc...) asparagine; by host glycan is linked to asparagine 402. Tyrosine 406 serves as the catalytic Nucleophile.

Belongs to the glycosyl hydrolase 34 family. Homotetramer. It depends on Ca(2+) as a cofactor. In terms of processing, N-glycosylated.

The protein resides in the virion membrane. It is found in the host apical cell membrane. It catalyses the reaction Hydrolysis of alpha-(2-&gt;3)-, alpha-(2-&gt;6)-, alpha-(2-&gt;8)- glycosidic linkages of terminal sialic acid residues in oligosaccharides, glycoproteins, glycolipids, colominic acid and synthetic substrates.. With respect to regulation, inhibited by the neuraminidase inhibitors zanamivir (Relenza) and oseltamivir (Tamiflu). These drugs interfere with the release of progeny virus from infected cells and are effective against all influenza strains. Resistance to neuraminidase inhibitors is quite rare. Its function is as follows. Catalyzes the removal of terminal sialic acid residues from viral and cellular glycoconjugates. Cleaves off the terminal sialic acids on the glycosylated HA during virus budding to facilitate virus release. Additionally helps virus spread through the circulation by further removing sialic acids from the cell surface. These cleavages prevent self-aggregation and ensure the efficient spread of the progeny virus from cell to cell. Otherwise, infection would be limited to one round of replication. Described as a receptor-destroying enzyme because it cleaves a terminal sialic acid from the cellular receptors. May facilitate viral invasion of the upper airways by cleaving the sialic acid moieties on the mucin of the airway epithelial cells. Likely to plays a role in the budding process through its association with lipid rafts during intracellular transport. May additionally display a raft-association independent effect on budding. Plays a role in the determination of host range restriction on replication and virulence. Sialidase activity in late endosome/lysosome traffic seems to enhance virus replication. The protein is Neuraminidase of Influenza A virus (strain A/Memphis/2/1978 H3N2).